Here is a 301-residue protein sequence, read N- to C-terminus: D-alanine--D-alanine ligase A (301 aa).

An ATP-grasp domain is found at 99-293 (KRILAFGNVR…FEELLDTIIE (195 aa)). Position 126–181 (126–181 (IENLGYPVFVKPNNGGSSVATTLVESKEAVKDAVLEALKYDTEVMIEEYIKGDEIT)) interacts with ATP. Positions 248, 260, and 262 each coordinate Mg(2+).

It belongs to the D-alanine--D-alanine ligase family. It depends on Mg(2+) as a cofactor. Mn(2+) serves as cofactor.

The protein localises to the cytoplasm. The enzyme catalyses 2 D-alanine + ATP = D-alanyl-D-alanine + ADP + phosphate + H(+). Its pathway is cell wall biogenesis; peptidoglycan biosynthesis. Its function is as follows. Cell wall formation. The sequence is that of D-alanine--D-alanine ligase A from Clostridium perfringens (strain 13 / Type A).